Consider the following 638-residue polypeptide: Threonine--tRNA ligase (638 aa).

Residues Met1 to Thr62 enclose the TGS domain. The catalytic stretch occupies residues Asp246–Pro537. Cys337, His388, and His514 together coordinate Zn(2+).

It belongs to the class-II aminoacyl-tRNA synthetase family. In terms of assembly, homodimer. The cofactor is Zn(2+).

It localises to the cytoplasm. It catalyses the reaction tRNA(Thr) + L-threonine + ATP = L-threonyl-tRNA(Thr) + AMP + diphosphate + H(+). Catalyzes the attachment of threonine to tRNA(Thr) in a two-step reaction: L-threonine is first activated by ATP to form Thr-AMP and then transferred to the acceptor end of tRNA(Thr). Also edits incorrectly charged L-seryl-tRNA(Thr). This is Threonine--tRNA ligase from Leptospira interrogans serogroup Icterohaemorrhagiae serovar copenhageni (strain Fiocruz L1-130).